The sequence spans 425 residues: Keratin, type II cytoskeletal I (425 aa).

The segment at Phe-1–Leu-16 is coil 1A. An IF rod domain is found at Phe-1 to Ile-296. The segment at Gln-17 to Tyr-37 is linker 1. The segment at Ile-38–Val-129 is coil 1B. The interval His-130 to Ile-153 is linker 12. Residues Ile-154–Glu-292 form a coil 2 region. Residues Glu-293 to Tyr-425 are tail.

This sequence belongs to the intermediate filament family. As to quaternary structure, heterotetramer of two type I and two type II keratins.

This chain is Keratin, type II cytoskeletal I, found in Xenopus laevis (African clawed frog).